The chain runs to 980 residues: Chitin binding domain containing chtb-2 (980 aa).

The N-terminal stretch at 1–20 (MRTMHCFLFILLFCLGQVFT) is a signal peptide. Asn187 and Asn190 each carry an N-linked (GlcNAc...) asparagine glycan. Disordered regions lie at residues 310-354 (ERQQ…AELD), 431-451 (QEEERQRKIQQQKVEMEQIRQ), and 486-512 (EILRQQEEDQKKKKLEKDREQREQQEA). N-linked (GlcNAc...) asparagine glycosylation is found at Asn941 and Asn975.

This chain is Chitin binding domain containing chtb-2, found in Caenorhabditis elegans.